We begin with the raw amino-acid sequence, 945 residues long: Endo-1,4-beta-xylanase 1 (945 aa).

Residues 16 to 41 (NGDRNPDKKSRESMEVSRKDNEEPEK) are compositionally biased toward basic and acidic residues. Residues 16-50 (NGDRNPDKKSRESMEVSRKDNEEPEKQNNNNVASI) form a disordered region. CBM-cenC domains are found at residues 57–197 (NVIV…EGPS), 227–362 (IVVN…IEGP), and 397–541 (NILT…GPSS). N-linked (GlcNAc...) asparagine glycosylation is found at Asn86, Asn239, Asn305, Asn349, Asn417, Asn453, and Asn687. One can recognise a GH10 domain in the interval 589–884 (SGASVRVRQI…NEAGKRFLAV (296 aa)). Glu718 serves as the catalytic Proton donor. Glu819 acts as the Nucleophile in catalysis.

Belongs to the glycosyl hydrolase 10 (cellulase F) family. As to expression, predominantly expressed in vascular bundles, but not in vessel cells. Mostly expressed in stems, at lower levels in roots, and weakly in inflorescences and seedlings.

The protein localises to the secreted. The protein resides in the cell wall. The catalysed reaction is Endohydrolysis of (1-&gt;4)-beta-D-xylosidic linkages in xylans.. Its pathway is glycan degradation; xylan degradation. In terms of biological role, binds to and hydrolyzes insoluble and soluble xylan substrates. Exhibits xylanase activity. The protein is Endo-1,4-beta-xylanase 1 of Arabidopsis thaliana (Mouse-ear cress).